We begin with the raw amino-acid sequence, 92 residues long: UPF0213 protein M28_Spy1146 (92 aa).

A GIY-YIG domain is found at 4-80 (KKAYMYVLEC…KRKTRSQKLA (77 aa)).

Belongs to the UPF0213 family.

This is UPF0213 protein M28_Spy1146 from Streptococcus pyogenes serotype M28 (strain MGAS6180).